A 267-amino-acid chain; its full sequence is Type III pantothenate kinase (267 aa).

6-13 contacts ATP; that stretch reads DVRNTHTT. 109 to 112 contributes to the substrate binding site; it reads GADR. The Proton acceptor role is filled by Asp-111. Residue Asp-131 coordinates K(+). ATP is bound at residue Ser-134. Substrate is bound at residue Thr-186.

The protein belongs to the type III pantothenate kinase family. Homodimer. Requires NH4(+) as cofactor. K(+) is required as a cofactor.

It is found in the cytoplasm. It catalyses the reaction (R)-pantothenate + ATP = (R)-4'-phosphopantothenate + ADP + H(+). It functions in the pathway cofactor biosynthesis; coenzyme A biosynthesis; CoA from (R)-pantothenate: step 1/5. Its function is as follows. Catalyzes the phosphorylation of pantothenate (Pan), the first step in CoA biosynthesis. This Mycobacterium sp. (strain JLS) protein is Type III pantothenate kinase.